Consider the following 189-residue polypeptide: Protein Rex (189 aa).

Positions 1 to 16 (MPKTRRRPRRSQRKRP) are enriched in basic residues. The interval 1–27 (MPKTRRRPRRSQRKRPPTPWPTSQGLD) is disordered. Positions 2–18 (PKTRRRPRRSQRKRPPT) match the Nuclear localization signal, and RNA-binding (RxRE) motif. The homomultimerization stretch occupies residues 56 to 70 (RPAYIVTPYWPPVQS). The residue at position 70 (serine 70) is a Phosphoserine; by host. The Nuclear export signal motif lies at 82–93 (LSAQLYSSLSLD). The segment at 87–189 (YSSLSLDSPP…PPSPGPSCPM (103 aa)) is disordered. Over residues 105-114 (PLRSLPRQSL) the composition is skewed to low complexity. The interval 123-131 (PSSRPCANT) is homomultimerization. Polar residues predominate over residues 143 to 164 (LGSTSQPCLFQTPDSGPKTCTP). At threonine 174 the chain carries Phosphothreonine; by host. The residue at position 177 (serine 177) is a Phosphoserine; by host. Residues 178-189 (FPPPSPGPSCPM) show a composition bias toward pro residues.

It belongs to the deltaretrovirus Rex protein family. Homomultimer. Multimeric assembly is essential for activity and involves XPO1. Binds to human XPO1 and KPNB1. Interacts (via N-terminal nuclear localization signal) with human NPM1. In terms of processing, phosphorylated.

It localises to the host nucleus. Its subcellular location is the host nucleolus. It is found in the host cytoplasm. Its function is as follows. Rex escorts unspliced gag-pro-pol and singly spliced env mRNAs out of the nucleus of infected cells. These mRNAs carry a recognition sequence called Rex responsive element (RxRE or XRE) located at the 3' region of the long terminal repeat (LTR). This function is essential since most HTLV proteins are translated from unspliced or partially spliced pre-mRNAs that cannot exit the nucleus by the pathway used by fully processed cellular mRNAs. Rex itself is translated from a fully spliced mRNA that probably readily exits the nucleus. Rex's nuclear localization signal (NLS) binds directly to KPNB1/importin beta-1 without previous binding to KPNA1/importin alpha-1. KPNB1 binds to the GDP bound form of RAN (Ran-GDP) and targets Rex to the nucleus. In the nucleus, the conversion from Ran-GDP to Ran-GTP dissociates Rex from KPNB1 and allows Rex's binding to the RRE in viral pre-mRNAs. Rex multimerizes on the RRE via cooperative assembly. This multimerization is critical for its full biological activity, since it may shield the viral RNA from being spliced or down-regulated, and probably exposes Rex's nuclear export signal (NES) to the surface. Rex can then form a complex with XPO1/CRM1, RANBP3 and Ran-GTP, leading to nuclear export of the complex. Conversion from Ran-GTP to Ran-GDP mediates dissociation of the Rex/RRE/XPO1/RANBP3/RAN complex, so that Rex can return to the nucleus for a subsequent round of export. This Human T-cell leukemia virus 1 (isolate Caribbea HS-35 subtype A) (HTLV-1) protein is Protein Rex.